The chain runs to 491 residues: Protein nucleotidyltransferase YdiU (491 aa).

ATP contacts are provided by G94, G96, R97, K117, D129, G130, R180, and R187. D256 (proton acceptor) is an active-site residue. Residues N257 and D266 each contribute to the Mg(2+) site. Position 266 (D266) interacts with ATP.

Belongs to the SELO family. Requires Mg(2+) as cofactor. Mn(2+) is required as a cofactor.

The enzyme catalyses L-seryl-[protein] + ATP = 3-O-(5'-adenylyl)-L-seryl-[protein] + diphosphate. It carries out the reaction L-threonyl-[protein] + ATP = 3-O-(5'-adenylyl)-L-threonyl-[protein] + diphosphate. The catalysed reaction is L-tyrosyl-[protein] + ATP = O-(5'-adenylyl)-L-tyrosyl-[protein] + diphosphate. It catalyses the reaction L-histidyl-[protein] + UTP = N(tele)-(5'-uridylyl)-L-histidyl-[protein] + diphosphate. The enzyme catalyses L-seryl-[protein] + UTP = O-(5'-uridylyl)-L-seryl-[protein] + diphosphate. It carries out the reaction L-tyrosyl-[protein] + UTP = O-(5'-uridylyl)-L-tyrosyl-[protein] + diphosphate. Functionally, nucleotidyltransferase involved in the post-translational modification of proteins. It can catalyze the addition of adenosine monophosphate (AMP) or uridine monophosphate (UMP) to a protein, resulting in modifications known as AMPylation and UMPylation. In Alkaliphilus metalliredigens (strain QYMF), this protein is Protein nucleotidyltransferase YdiU.